The chain runs to 123 residues: Putative membrane protein insertion efficiency factor (123 aa).

Residues 1-23 (MGSCGGKHTGKGAPKPYSRNFTD) form a disordered region.

Belongs to the UPF0161 family.

The protein resides in the cell inner membrane. Its function is as follows. Could be involved in insertion of integral membrane proteins into the membrane. The polypeptide is Putative membrane protein insertion efficiency factor (Brucella abortus (strain 2308)).